A 505-amino-acid polypeptide reads, in one-letter code: Maturase K (505 aa).

Belongs to the intron maturase 2 family. MatK subfamily.

It localises to the plastid. The protein localises to the chloroplast. Its function is as follows. Usually encoded in the trnK tRNA gene intron. Probably assists in splicing its own and other chloroplast group II introns. The sequence is that of Maturase K from Micranthes integrifolia (Wholeleaf saxifrage).